Here is a 465-residue protein sequence, read N- to C-terminus: MKIVVSRGLDLSLKGAPKESGFCGKVDPTYVSVDLRPFAPLPLEVKVTPGDQVTAGSPLAEYKLFSGVFITSPVDGEVVEIRRGNKRALLEIVIKKKPGISQTKFSYDLQSLTQKDLLEVFKKEGLFALFKQRPFDIPALPTQSPRDVFINLADNRPFTPSVEKHLSLFSSKEDGYYIFVVGVQAIAKLFGLKPHIISTDRLTLPTQDLVSIAHLHTIDGPFPSGSPSTHIHHIARIRNERDVVFTISFQEVLSIGHLFLKGFVLGQQIVALAGSALPPSQRKYLITAKGASFSDLLPKDIFSSDEITLISGDPLTGRLCKKEENPCLGMRDHTITLLPNPKTRESFSFLRLGWNKLTVTRTYLSGFFKRKRVFMDMDTNMHGEKRPIIDAEIYERVSAIPVPVALIIKALETQNFEEACRLGLLEVAPEDFALPTFIDPSKTEMFSIVKESLLRYAKENVVTSS.

It belongs to the NqrA family. As to quaternary structure, composed of six subunits; NqrA, NqrB, NqrC, NqrD, NqrE and NqrF.

It carries out the reaction a ubiquinone + n Na(+)(in) + NADH + H(+) = a ubiquinol + n Na(+)(out) + NAD(+). NQR complex catalyzes the reduction of ubiquinone-1 to ubiquinol by two successive reactions, coupled with the transport of Na(+) ions from the cytoplasm to the periplasm. NqrA to NqrE are probably involved in the second step, the conversion of ubisemiquinone to ubiquinol. In Chlamydia trachomatis serovar L2 (strain ATCC VR-902B / DSM 19102 / 434/Bu), this protein is Na(+)-translocating NADH-quinone reductase subunit A.